Consider the following 498-residue polypeptide: Ammonium transporter 3 member 1 (498 aa).

A run of 11 helical transmembrane segments spans residues 33-53 (ISAT…YGSI), 58-78 (WAVN…LCWV), 143-163 (MVYF…GSLL), 171-191 (WMLF…FSLW), 206-226 (GGYV…YWVG), 241-261 (VLLM…FNGG), 276-296 (NTNI…VIFF), 301-321 (VIGA…GAGL), 325-345 (WAAI…MMVV), 369-389 (GFLG…SLFL), and 412-432 (VAGA…VCLA). The segment at 478–498 (DNNDTHHNNNKAAPSGVTQNV) is disordered. The span at 487–498 (NKAAPSGVTQNV) shows a compositional bias: polar residues.

It belongs to the ammonia transporter channel (TC 1.A.11.2) family. As to expression, expressed in root.

Its subcellular location is the membrane. Its function is as follows. Involved in ammonium transport. This chain is Ammonium transporter 3 member 1 (AMT3-1), found in Oryza sativa subsp. japonica (Rice).